We begin with the raw amino-acid sequence, 55 residues long: Conotoxin Cal22d (55 aa).

A propeptide spanning residues 1–5 is cleaved from the precursor; it reads GRPSA.

Contains 4 disulfide bonds. As to expression, expressed by the venom duct.

It localises to the secreted. Its function is as follows. Probable neurotoxin with unknown target. Possibly targets ion channels. The chain is Conotoxin Cal22d from Californiconus californicus (California cone).